Here is a 66-residue protein sequence, read N- to C-terminus: Venom protein 27.1 (66 aa).

An N-terminal signal peptide occupies residues 1–22 (MNTKTLIVVFLVCLLVSEVVLA).

In terms of processing, contains 1 disulfide bond. In terms of tissue distribution, expressed by the venom gland.

The protein resides in the secreted. The protein is Venom protein 27.1 of Lychas mucronatus (Chinese swimming scorpion).